Reading from the N-terminus, the 53-residue chain is Sec-independent protein translocase protein TatA (53 aa).

Residues 1–21 traverse the membrane as a helical segment; that stretch reads MGMSFSHLLIVLLIIFVLFGA.

It belongs to the TatA/E family. As to quaternary structure, the Tat system comprises two distinct complexes: a TatABC complex, containing multiple copies of TatA, TatB and TatC subunits, and a separate TatA complex, containing only TatA subunits. Substrates initially bind to the TatABC complex, which probably triggers association of the separate TatA complex to form the active translocon.

Its subcellular location is the cell inner membrane. Its function is as follows. Part of the twin-arginine translocation (Tat) system that transports large folded proteins containing a characteristic twin-arginine motif in their signal peptide across membranes. TatA could form the protein-conducting channel of the Tat system. This chain is Sec-independent protein translocase protein TatA, found in Rickettsia typhi (strain ATCC VR-144 / Wilmington).